A 471-amino-acid chain; its full sequence is MEMEILYNYDTIIIGGGLSGLNTAYDLKKSNFKILVLEARNRFGGRTDSVKVGDGWVDAGGQWLGTNNPNLKQLCKELKLETYKQFYQGKTVFDIYDDGLIKSFDESSPNFDLCEIGLGNINPIIRAIKEVMKNIDFSKCSKESPIMLSLEKLTVSEWLRVCGYGESVKFFNWFCKMSVASSSDDISILFLLKYVNSINGFESLFISDDDCTESDRIIGGSSMVSERIVSYLKDDCKLNCEVTLIDQISHKNSRLIKITTSNNENYYCRNVVSTIPPMLLKNVIFKPDLPIEKQRLKNEMEMGNTIKVIVIYDSVFWRDQGYNGKSQSFVGPIYQSFDNCTNDLSVKSIIGFINGKEEIKYWYSKSLEERRSAVLNQYSKYWGPKALNPIHYIERNWSLDKYSAGCFMGVCKSGDIISQCNNYYTQPHGNIHWAGTETSTQWYGHMEGAITSSKRVVNEILKNSLNSKSKL.

Cysteine 406 bears the S-8alpha-FAD cysteine mark.

Belongs to the flavin monoamine oxidase family. FAD is required as a cofactor.

It catalyses the reaction a secondary aliphatic amine + O2 + H2O = a primary amine + an aldehyde + H2O2. The polypeptide is Probable flavin-containing monoamine oxidase B (maoB-1) (Dictyostelium discoideum (Social amoeba)).